Consider the following 303-residue polypeptide: GTPase Era (303 aa).

Residues 7 to 176 (KSGFVAIIGR…LDNVVSHLDE (170 aa)) form the Era-type G domain. The tract at residues 15-22 (GRPNVGKS) is G1. A GTP-binding site is contributed by 15-22 (GRPNVGKS). Residues 41–45 (QTTRN) are G2. Residues 62-65 (DTPG) form a G3 region. GTP contacts are provided by residues 62–66 (DTPGV) and 125–128 (NKVD). Residues 125-128 (NKVD) are G4. The segment at 155–157 (ISA) is G5. Residues 207-284 (TRQEVPHSVA…FLETWVKVEP (78 aa)) enclose the KH type-2 domain.

It belongs to the TRAFAC class TrmE-Era-EngA-EngB-Septin-like GTPase superfamily. Era GTPase family. In terms of assembly, monomer.

Its subcellular location is the cytoplasm. The protein localises to the cell membrane. In terms of biological role, an essential GTPase that binds both GDP and GTP, with rapid nucleotide exchange. Plays a role in 16S rRNA processing and 30S ribosomal subunit biogenesis and possibly also in cell cycle regulation and energy metabolism. This is GTPase Era from Leuconostoc citreum (strain KM20).